A 551-amino-acid polypeptide reads, in one-letter code: Steroid transmembrane transporter SLC22A24 (551 aa).

12 helical membrane-spanning segments follow: residues 16 to 36 (FQILHLIFVLICFILVVPHTV), 146 to 166 (SVAKFIYMTGIFIGHLMGGHL), 174 to 194 (FIVTCGLLTLAVTETSVAFAP), 204 to 222 (FLTGISSSCIRTNSALLIL), 235 to 255 (ALIFSAGGIGQVLLGVLAFGI), 260 to 280 (HLQLAMSVPVFFLLIPTRWLS), 350 to 370 (ICLLSFVRCVSLISTVGLLIN), 378 to 398 (VFLLQCLYGVVCTPANLLGNF), 410 to 430 (IIFMSVMGISILSITFLTQEM), 435 to 455 (LVLASLGGAISSASLTSTAVL), 469 to 489 (LGVIGIFGSAGAALSPLLMIL), and 496 to 516 (LPWIIYGVLPILSSLVVLLLP). A disordered region spans residues 524 to 551 (PDSIQDVENKRKSSREVKKDAVAKVTPF). Residues 530-545 (VENKRKSSREVKKDAV) show a composition bias toward basic and acidic residues.

Localized to the kidney. Mainly expressed in the late segments of proximal tubules.

The protein localises to the cell membrane. It carries out the reaction estrone 3-sulfate(out) + glutarate(in) = estrone 3-sulfate(in) + glutarate(out). It catalyses the reaction 17beta-estradiol 17-O-(beta-D-glucuronate)(out) + glutarate(in) = 17beta-estradiol 17-O-(beta-D-glucuronate)(in) + glutarate(out). The enzyme catalyses dehydroepiandrosterone 3-sulfate(out) + glutarate(in) = dehydroepiandrosterone 3-sulfate(in) + glutarate(out). Renal transmembrane organic anion/dicarboxylate exchanger that participates in the reabsorption of conjugated steroids, as well as bile acids, driven by an outward gradient of dicarboxylates such as glutarate or succinate. Transports estrone 3-sulfate and estradiol-17-glucuronide (17beta-estradiol 17-O-(beta-D-glucuronate)), but not androstanediol glucuronide (5alpha-androstane-3alpha,17beta-diol 3-O-(beta-D-glucuronate)), nor taurocholate. Prefers sulfate conjugates of steroids rather than glucuronide conjugates. This chain is Steroid transmembrane transporter SLC22A24, found in Rattus norvegicus (Rat).